A 149-amino-acid chain; its full sequence is Large ribosomal subunit protein bL9 (149 aa).

The protein belongs to the bacterial ribosomal protein bL9 family.

In terms of biological role, binds to the 23S rRNA. This Xanthomonas campestris pv. campestris (strain 8004) protein is Large ribosomal subunit protein bL9.